Consider the following 375-residue polypeptide: 23S rRNA (uracil(747)-C(5))-methyltransferase RlmC (375 aa).

Positions 3, 11, 14, and 87 each coordinate [4Fe-4S] cluster. Glutamine 212, phenylalanine 241, glutamate 262, and asparagine 307 together coordinate S-adenosyl-L-methionine. Cysteine 334 acts as the Nucleophile in catalysis.

Belongs to the class I-like SAM-binding methyltransferase superfamily. RNA M5U methyltransferase family. RlmC subfamily.

The catalysed reaction is uridine(747) in 23S rRNA + S-adenosyl-L-methionine = 5-methyluridine(747) in 23S rRNA + S-adenosyl-L-homocysteine + H(+). Catalyzes the formation of 5-methyl-uridine at position 747 (m5U747) in 23S rRNA. The sequence is that of 23S rRNA (uracil(747)-C(5))-methyltransferase RlmC from Escherichia coli O6:H1 (strain CFT073 / ATCC 700928 / UPEC).